The following is a 452-amino-acid chain: tRNA modification GTPase MnmE (452 aa).

(6S)-5-formyl-5,6,7,8-tetrahydrofolate-binding residues include arginine 21, glutamate 78, and lysine 118. Positions 214–375 constitute a TrmE-type G domain; it reads GMKVVIAGRP…LREHLKQAMG (162 aa). Residue asparagine 224 coordinates K(+). Residues 224-229, 243-249, and 268-271 each bind GTP; these read NAGKSS, TDIAGTT, and DTAG. Serine 228 contributes to the Mg(2+) binding site. K(+) is bound by residues threonine 243, isoleucine 245, and threonine 248. Residue threonine 249 coordinates Mg(2+). Position 452 (lysine 452) interacts with (6S)-5-formyl-5,6,7,8-tetrahydrofolate.

This sequence belongs to the TRAFAC class TrmE-Era-EngA-EngB-Septin-like GTPase superfamily. TrmE GTPase family. In terms of assembly, homodimer. Heterotetramer of two MnmE and two MnmG subunits. It depends on K(+) as a cofactor.

The protein resides in the cytoplasm. Its function is as follows. Exhibits a very high intrinsic GTPase hydrolysis rate. Involved in the addition of a carboxymethylaminomethyl (cmnm) group at the wobble position (U34) of certain tRNAs, forming tRNA-cmnm(5)s(2)U34. The chain is tRNA modification GTPase MnmE from Haemophilus influenzae (strain PittGG).